We begin with the raw amino-acid sequence, 355 residues long: UDP-N-acetylglucosamine--N-acetylmuramyl-(pentapeptide) pyrophosphoryl-undecaprenol N-acetylglucosamine transferase (355 aa).

Residues 14–16 (TGG), Asn126, Arg162, Ser190, Ile243, 262–267 (ALTVSE), and Gln287 each bind UDP-N-acetyl-alpha-D-glucosamine.

The protein belongs to the glycosyltransferase 28 family. MurG subfamily.

It localises to the cell inner membrane. The enzyme catalyses di-trans,octa-cis-undecaprenyl diphospho-N-acetyl-alpha-D-muramoyl-L-alanyl-D-glutamyl-meso-2,6-diaminopimeloyl-D-alanyl-D-alanine + UDP-N-acetyl-alpha-D-glucosamine = di-trans,octa-cis-undecaprenyl diphospho-[N-acetyl-alpha-D-glucosaminyl-(1-&gt;4)]-N-acetyl-alpha-D-muramoyl-L-alanyl-D-glutamyl-meso-2,6-diaminopimeloyl-D-alanyl-D-alanine + UDP + H(+). It functions in the pathway cell wall biogenesis; peptidoglycan biosynthesis. Its function is as follows. Cell wall formation. Catalyzes the transfer of a GlcNAc subunit on undecaprenyl-pyrophosphoryl-MurNAc-pentapeptide (lipid intermediate I) to form undecaprenyl-pyrophosphoryl-MurNAc-(pentapeptide)GlcNAc (lipid intermediate II). The polypeptide is UDP-N-acetylglucosamine--N-acetylmuramyl-(pentapeptide) pyrophosphoryl-undecaprenol N-acetylglucosamine transferase (Vibrio vulnificus (strain CMCP6)).